The following is a 555-amino-acid chain: Solute carrier family 22 member 2 (555 aa).

Residues 1–22 are Cytoplasmic-facing; sequence MPTTVDDVLEHGGEFHFFQKQM. A helical membrane pass occupies residues 23–43; that stretch reads FFLLALLSATFAPIYVGIVFL. Topologically, residues 44-150 are extracellular; it reads GFTPDHRCRS…LVCANSWMLD (107 aa). The N-linked (GlcNAc...) asparagine glycan is linked to Asn-72. A helical membrane pass occupies residues 151-171; that stretch reads LFQSSVNVGFFIGSMSIGYIA. At 172 to 177 the chain is on the cytoplasmic side; sequence DRFGRK. The chain crosses the membrane as a helical span at residues 178–198; it reads LCLLTTVLINAAAGVLMAISP. The Extracellular portion of the chain corresponds to 199 to 208; the sequence is TYTWMLIFRL. A helical membrane pass occupies residues 209–229; the sequence is IQGLVSKAGWLIGYILITEFV. At 230–238 the chain is on the cytoplasmic side; that stretch reads GRRYRRTVG. Residues 239–259 traverse the membrane as a helical segment; sequence IFYQVAYTVGLLVLAGVAYAL. Topologically, residues 260–263 are extracellular; that stretch reads PHWR. The chain crosses the membrane as a helical span at residues 264–284; the sequence is WLQFTVSLPNFFFLLYYWCIP. Positions 284-288 match the Proline-rich sequence motif; that stretch reads PESPR. Over 285-348 the chain is Cytoplasmic; sequence ESPRWLISQN…VRTPQIRKHT (64 aa). Residues 349–369 form a helical membrane-spanning segment; sequence MILMYNWFTSSVLYQGLIMHM. Over 370-375 the chain is Extracellular; the sequence is GLAGDN. Residues 376–396 traverse the membrane as a helical segment; it reads IYLDFFYSALVEFPAAFMIIL. At 397 to 414 the chain is on the cytoplasmic side; it reads TIDRIGRRYPWAASNMVA. Residues 415 to 435 form a helical membrane-spanning segment; it reads GAACLASVFIPGDLQWLKIII. Residues 436–441 are Extracellular-facing; sequence SCLGRM. Residues 442 to 462 form a helical membrane-spanning segment; it reads GITMAYEIVCLVNAELYPTFI. At 463–464 the chain is on the cytoplasmic side; sequence RN. The helical transmembrane segment at 465–485 threads the bilayer; that stretch reads LGVHICSSMCDIGGIITPFLV. The Extracellular portion of the chain corresponds to 486–494; sequence YRLTNIWLE. A helical membrane pass occupies residues 495 to 515; sequence LPLMVFGVLGLVAGGLVLLLP. At 516–555 the chain is on the cytoplasmic side; sequence ETKGKALPETIEEAENMQRPRKNKEKMIYLQVQKLDIPLN.

It belongs to the major facilitator (TC 2.A.1) superfamily. Organic cation transporter (TC 2.A.1.19) family. In terms of processing, tyrosine phosphorylated by tyrosine-protein kinase YES1. In terms of tissue distribution, mainly expressed in kidney, in the cortex and medulla. Localized in testis, mostly to peritubular myoid cells and Leydig cells and also detected along the basal membrane of Sertoli cells. Expressed in brain, in neurons of the cerebral cortex and in various subcortical nuclei. In the brain, also detected in the dopaminergic regions of the substantia nigra. Expressed in tracheal and bronchial ciliated epithelium in the respiratory tract. Also detected in secretory phase endometrium, in scattered stromal cells. Expressed in spleen, placenta, small intestine and spinal cord. Weakly expressed in prostate, uterus and lung. As to expression, mainly expressed in kidney, bone marrow and testis. Expressed in colon, skeletal muscle, spinal cord, placenta and liver.

The protein resides in the basolateral cell membrane. It localises to the basal cell membrane. The protein localises to the apical cell membrane. The enzyme catalyses (R)-noradrenaline(out) = (R)-noradrenaline(in). It carries out the reaction (R)-adrenaline(out) = (R)-adrenaline(in). The catalysed reaction is serotonin(out) = serotonin(in). It catalyses the reaction dopamine(out) = dopamine(in). The enzyme catalyses histamine(out) = histamine(in). It carries out the reaction thiamine(in) = thiamine(out). The catalysed reaction is creatinine(in) = creatinine(out). It catalyses the reaction 1-methylnicotinamide(out) = 1-methylnicotinamide(in). The enzyme catalyses guanidine(out) = guanidine(in). It carries out the reaction choline(out) = choline(in). The catalysed reaction is agmatine(out) = agmatine(in). It catalyses the reaction putrescine(out) = putrescine(in). The enzyme catalyses spermidine(in) = spermidine(out). It carries out the reaction tyramine(in) = tyramine(out). The catalysed reaction is L-histidyl-L-proline diketopiperazine(in) = L-histidyl-L-proline diketopiperazine(out). It catalyses the reaction (R)-salsolinol(in) = (R)-salsolinol(out). The enzyme catalyses N-methyl-(R)-salsolinol(in) = N-methyl-(R)-salsolinol(out). It carries out the reaction acetylcholine(in) = acetylcholine(out). The catalysed reaction is prostaglandin F2alpha(out) = prostaglandin F2alpha(in). It catalyses the reaction prostaglandin E2(out) = prostaglandin E2(in). Tyrosine phosphorylation of the transporter leads to activation of the transport activity. TEA uptake is activated by tyrosine phosphorylation. Inhibited by cGMP, most likely through a cGMP-binding protein that interacts with OCT2. Functionally, electrogenic voltage-dependent transporter that mediates the transport of a variety of organic cations such as endogenous bioactive amines, cationic drugs and xenobiotics. Functions as a Na(+)-independent, bidirectional uniporter. Cation cellular uptake or release is driven by the electrochemical potential, i.e. membrane potential and concentration gradient. However, may also engage electroneutral cation exchange when saturating concentrations of cation substrates are reached. Predominantly expressed at the basolateral membrane of hepatocytes and proximal tubules and involved in the uptake and disposition of cationic compounds by hepatic and renal clearance from the blood flow. Implicated in monoamine neurotransmitters uptake such as histamine, dopamine, adrenaline/epinephrine, noradrenaline/norepinephrine, serotonin and tyramine, thereby supporting a physiological role in the central nervous system by regulating interstitial concentrations of neurotransmitters. Also capable of transporting dopaminergic neuromodulators cyclo(his-pro), salsolinol and N-methyl-salsolinol, thereby involved in the maintenance of dopaminergic cell integrity in the central nervous system. Mediates the bidirectional transport of acetylcholine (ACh) at the apical membrane of ciliated cell in airway epithelium, thereby playing a role in luminal release of ACh from bronchial epithelium. Also transports guanidine and endogenous monoamines such as vitamin B1/thiamine, creatinine and N-1-methylnicotinamide (NMN). Mediates the uptake and efflux of quaternary ammonium compound choline. Mediates the bidirectional transport of polyamine agmatine and the uptake of polyamines putrescine and spermidine. Able to transport non-amine endogenous compounds such as prostaglandin E2 (PGE2) and prostaglandin F2-alpha (PGF2-alpha). Also involved in the uptake of xenobiotic 4-(4-(dimethylamino)styryl)-N-methylpyridinium (ASP). May contribute to regulate the transport of organic compounds in testis across the blood-testis-barrier. In terms of biological role, in contrast with isoform 1, not able to transport guanidine, creatinine, cimetidine and metformin. This is Solute carrier family 22 member 2 from Homo sapiens (Human).